The sequence spans 614 residues: V-type proton ATPase catalytic subunit A (614 aa).

247–254 serves as a coordination point for ATP; sequence GAFGCGKT.

The protein belongs to the ATPase alpha/beta chains family. In terms of assembly, V-ATPase is a heteromultimeric enzyme made up of two complexes: the ATP-hydrolytic V1 complex and the proton translocation V0 complex. The V1 complex consists of three catalytic AB heterodimers that form a heterohexamer, three peripheral stalks each consisting of EG heterodimers, one central rotor including subunits D and F, and the regulatory subunits C and H. The proton translocation complex V0 consists of the proton transport subunit a, a ring of proteolipid subunits c9c'', rotary subunit d, subunits e and f, and the accessory subunits VhaAC45 and ATP6AP2.

The enzyme catalyses ATP + H2O + 4 H(+)(in) = ADP + phosphate + 5 H(+)(out). Its activity is regulated as follows. ATP hydrolysis occurs at the interface between the nucleotide-binding domains of subunits A and B. ATP hydrolysis triggers a conformational change in the subunits D and F, which induces a shift of subunit d. The c-ring is subsequently rotated and results in a continuous proton translocation across the membrane. Its function is as follows. Catalytic subunit of the V1 complex of vacuolar(H+)-ATPase (V-ATPase), a multisubunit enzyme composed of a peripheral complex (V1) that hydrolyzes ATP and a membrane integral complex (V0) that translocates protons. V-ATPase is responsible for acidifying and maintaining the pH of intracellular compartments and in some cell types, is targeted to the plasma membrane, where it is responsible for acidifying the extracellular environment. The protein is V-type proton ATPase catalytic subunit A (VhaA) of Aedes aegypti (Yellowfever mosquito).